We begin with the raw amino-acid sequence, 496 residues long: Probable cytosol aminopeptidase (496 aa).

Mn(2+) contacts are provided by K257 and D262. K269 is a catalytic residue. Mn(2+) is bound by residues D281, D341, and E343. Residue R345 is part of the active site.

Belongs to the peptidase M17 family. Mn(2+) serves as cofactor.

It localises to the cytoplasm. The catalysed reaction is Release of an N-terminal amino acid, Xaa-|-Yaa-, in which Xaa is preferably Leu, but may be other amino acids including Pro although not Arg or Lys, and Yaa may be Pro. Amino acid amides and methyl esters are also readily hydrolyzed, but rates on arylamides are exceedingly low.. The enzyme catalyses Release of an N-terminal amino acid, preferentially leucine, but not glutamic or aspartic acids.. Its function is as follows. Presumably involved in the processing and regular turnover of intracellular proteins. Catalyzes the removal of unsubstituted N-terminal amino acids from various peptides. The sequence is that of Probable cytosol aminopeptidase from Prochlorococcus marinus (strain SARG / CCMP1375 / SS120).